The chain runs to 274 residues: Penicillin-insensitive murein endopeptidase (274 aa).

Residues 1-19 form the signal peptide; that stretch reads MKKTAIALLAWFVSSASLA. Intrachain disulfides connect cysteine 44–cysteine 265, cysteine 187–cysteine 235, and cysteine 216–cysteine 223. Zn(2+)-binding residues include histidine 110, histidine 113, aspartate 120, aspartate 147, histidine 150, and histidine 211. The tract at residues 225–274 is disordered; the sequence is DQPLPPPGDGCGAELQSWFEPPKLGTTKPEKKTPPPLPPSCQALLDEHVL.

The protein belongs to the peptidase M74 family. Dimer. Zn(2+) is required as a cofactor.

Its subcellular location is the periplasm. Its function is as follows. Murein endopeptidase that cleaves the D-alanyl-meso-2,6-diamino-pimelyl amide bond that connects peptidoglycan strands. Likely plays a role in the removal of murein from the sacculus. The protein is Penicillin-insensitive murein endopeptidase of Salmonella paratyphi B (strain ATCC BAA-1250 / SPB7).